Here is a 115-residue protein sequence, read N- to C-terminus: Mitochondrial zinc maintenance protein 1, mitochondrial (115 aa).

A mitochondrion-targeting transit peptide spans 1-23; the sequence is MTTSTAAAAKSAYRQLLRSTRVV.

It belongs to the complex I LYR family. MZM1 subfamily. As to quaternary structure, interacts with RIP1.

The protein localises to the mitochondrion matrix. Its function is as follows. Assembly factor required for Rieske Fe-S protein RIP1 incorporation into the cytochrome b-c1 (CIII) complex. Functions as a chaperone, binding to this subunit within the mitochondrial matrix and stabilizing it prior to its translocation and insertion into the late CIII dimeric intermediate within the mitochondrial inner membrane. Modulates the mitochondrial matrix zinc pool. This is Mitochondrial zinc maintenance protein 1, mitochondrial (MZM1) from Penicillium rubens (strain ATCC 28089 / DSM 1075 / NRRL 1951 / Wisconsin 54-1255) (Penicillium chrysogenum).